We begin with the raw amino-acid sequence, 272 residues long: Imidazole glycerol phosphate synthase subunit HisF (272 aa).

Residues D11 and D130 contribute to the active site.

It belongs to the HisA/HisF family. As to quaternary structure, heterodimer of HisH and HisF.

The protein localises to the cytoplasm. The catalysed reaction is 5-[(5-phospho-1-deoxy-D-ribulos-1-ylimino)methylamino]-1-(5-phospho-beta-D-ribosyl)imidazole-4-carboxamide + L-glutamine = D-erythro-1-(imidazol-4-yl)glycerol 3-phosphate + 5-amino-1-(5-phospho-beta-D-ribosyl)imidazole-4-carboxamide + L-glutamate + H(+). The protein operates within amino-acid biosynthesis; L-histidine biosynthesis; L-histidine from 5-phospho-alpha-D-ribose 1-diphosphate: step 5/9. Functionally, IGPS catalyzes the conversion of PRFAR and glutamine to IGP, AICAR and glutamate. The HisF subunit catalyzes the cyclization activity that produces IGP and AICAR from PRFAR using the ammonia provided by the HisH subunit. This is Imidazole glycerol phosphate synthase subunit HisF from Methanococcus maripaludis (strain C5 / ATCC BAA-1333).